A 344-amino-acid polypeptide reads, in one-letter code: S-adenosylmethionine:tRNA ribosyltransferase-isomerase (344 aa).

The protein belongs to the QueA family. As to quaternary structure, monomer.

The protein resides in the cytoplasm. It carries out the reaction 7-aminomethyl-7-carbaguanosine(34) in tRNA + S-adenosyl-L-methionine = epoxyqueuosine(34) in tRNA + adenine + L-methionine + 2 H(+). The protein operates within tRNA modification; tRNA-queuosine biosynthesis. Functionally, transfers and isomerizes the ribose moiety from AdoMet to the 7-aminomethyl group of 7-deazaguanine (preQ1-tRNA) to give epoxyqueuosine (oQ-tRNA). The polypeptide is S-adenosylmethionine:tRNA ribosyltransferase-isomerase (Pediococcus pentosaceus (strain ATCC 25745 / CCUG 21536 / LMG 10740 / 183-1w)).